We begin with the raw amino-acid sequence, 164 residues long: DNA-directed RNA polymerase 19 kDa subunit (164 aa).

The segment covering 1–35 has biased composition (acidic residues); that stretch reads MADTDDIIDYESDDLTEYEDDDEEEEDGESLETSD. The disordered stretch occupies residues 1-39; the sequence is MADTDDIIDYESDDLTEYEDDDEEEEDGESLETSDIDPK.

The protein belongs to the poxviridae DNA-directed RNA polymerase 19 kDa subunit family. As to quaternary structure, the DNA-dependent RNA polymerase used for intermediate and late genes expression consists of eight subunits Rpo30/OPG66, Rpo7/OPG90, Rpo22/OPG103, Rpo147/OPG105, Rpo18/OPG119, Rpo19/OPG131, Rpo132/OPG151 and Rpo35/OPG156. The same holoenzyme, with the addition of the transcription-specificity factor OPG109, is used for early gene expression.

It localises to the virion. The enzyme catalyses RNA(n) + a ribonucleoside 5'-triphosphate = RNA(n+1) + diphosphate. Its function is as follows. Part of the DNA-dependent RNA polymerase which catalyzes the transcription of viral DNA into RNA using the four ribonucleoside triphosphates as substrates. Responsible for the transcription of early, intermediate and late genes. DNA-dependent RNA polymerase associates with the early transcription factor (ETF), itself composed of OPG118 and OPG133, thereby allowing the early genes transcription. Late transcription, and probably also intermediate transcription, require newly synthesized RNA polymerase. The sequence is that of DNA-directed RNA polymerase 19 kDa subunit (OPG131) from Variola virus (isolate Human/India/Ind3/1967) (VARV).